The sequence spans 46 residues: MRLAMPSGNQEPRRDPELKRKAWLAVFLGSALFWVVVALLIWKVWG.

The helical transmembrane segment at 22-42 (AWLAVFLGSALFWVVVALLIW) threads the bilayer.

It is found in the cell inner membrane. This is Protein YmiA (ymiA) from Escherichia coli (strain K12).